Consider the following 471-residue polypeptide: Ribosomal protein uS12 methylthiotransferase RimO (471 aa).

The region spanning 2–122 is the MTTase N-terminal domain; sequence IKVSLISLGC…VAPIIQEIYA (121 aa). Cysteine 11, cysteine 47, cysteine 84, cysteine 166, cysteine 170, and cysteine 173 together coordinate [4Fe-4S] cluster. The Radical SAM core domain maps to 152-395; it reads LTPKHFAYVK…MALQKQIAAD (244 aa). Residues 398 to 458 form the TRAM domain; it reads KTYVGRTLRV…DYDLLALPPG (61 aa).

Belongs to the methylthiotransferase family. RimO subfamily. [4Fe-4S] cluster serves as cofactor.

The protein localises to the cytoplasm. It catalyses the reaction L-aspartate(89)-[ribosomal protein uS12]-hydrogen + (sulfur carrier)-SH + AH2 + 2 S-adenosyl-L-methionine = 3-methylsulfanyl-L-aspartate(89)-[ribosomal protein uS12]-hydrogen + (sulfur carrier)-H + 5'-deoxyadenosine + L-methionine + A + S-adenosyl-L-homocysteine + 2 H(+). Catalyzes the methylthiolation of an aspartic acid residue of ribosomal protein uS12. The chain is Ribosomal protein uS12 methylthiotransferase RimO from Opitutus terrae (strain DSM 11246 / JCM 15787 / PB90-1).